A 159-amino-acid polypeptide reads, in one-letter code: NADH-quinone oxidoreductase subunit B (159 aa).

[4Fe-4S] cluster is bound by residues Cys-32, Cys-33, Cys-97, and Cys-126.

Belongs to the complex I 20 kDa subunit family. In terms of assembly, NDH-1 is composed of 14 different subunits. Subunits NuoB, C, D, E, F, and G constitute the peripheral sector of the complex. [4Fe-4S] cluster serves as cofactor.

It is found in the cell inner membrane. It catalyses the reaction a quinone + NADH + 5 H(+)(in) = a quinol + NAD(+) + 4 H(+)(out). Functionally, NDH-1 shuttles electrons from NADH, via FMN and iron-sulfur (Fe-S) centers, to quinones in the respiratory chain. The immediate electron acceptor for the enzyme in this species is believed to be ubiquinone. Couples the redox reaction to proton translocation (for every two electrons transferred, four hydrogen ions are translocated across the cytoplasmic membrane), and thus conserves the redox energy in a proton gradient. This is NADH-quinone oxidoreductase subunit B from Helicobacter acinonychis (strain Sheeba).